A 404-amino-acid polypeptide reads, in one-letter code: 4-hydroxy-3-methylbut-2-en-1-yl diphosphate synthase (flavodoxin) (404 aa).

[4Fe-4S] cluster is bound by residues Cys310, Cys313, Cys345, and Glu352.

It belongs to the IspG family. The cofactor is [4Fe-4S] cluster.

The catalysed reaction is (2E)-4-hydroxy-3-methylbut-2-enyl diphosphate + oxidized [flavodoxin] + H2O + 2 H(+) = 2-C-methyl-D-erythritol 2,4-cyclic diphosphate + reduced [flavodoxin]. Its pathway is isoprenoid biosynthesis; isopentenyl diphosphate biosynthesis via DXP pathway; isopentenyl diphosphate from 1-deoxy-D-xylulose 5-phosphate: step 5/6. Its function is as follows. Converts 2C-methyl-D-erythritol 2,4-cyclodiphosphate (ME-2,4cPP) into 1-hydroxy-2-methyl-2-(E)-butenyl 4-diphosphate. The polypeptide is 4-hydroxy-3-methylbut-2-en-1-yl diphosphate synthase (flavodoxin) (Treponema pallidum (strain Nichols)).